We begin with the raw amino-acid sequence, 226 residues long: MTVQRLVAAAVLVALVSLILNNVAAFTSNWVCQTLEDGRRRSVGLWRSCWLVDRTRGGPSPGARAGQVDAHDCEALGWGSEAAGFQESRGTVKLQFDMMRACNLVATAALTAGQLTFLLGLVGLPLLSPDAPCWEEAMAAAFQLASFVLVIGLVTFYRIGPYTNLSWSCYLNIGACLLATLAAAMLIWNILHKREDCMAPRVIVISRSLTARFRRGLDNDYVESPC.

Over 1–5 the chain is Cytoplasmic; the sequence is MTVQR. A helical membrane pass occupies residues 6 to 26; the sequence is LVAAAVLVALVSLILNNVAAF. The Extracellular portion of the chain corresponds to 27 to 103; it reads TSNWVCQTLE…LQFDMMRACN (77 aa). A helical transmembrane segment spans residues 104 to 124; sequence LVATAALTAGQLTFLLGLVGL. Topologically, residues 125-136 are cytoplasmic; the sequence is PLLSPDAPCWEE. A helical membrane pass occupies residues 137–157; sequence AMAAAFQLASFVLVIGLVTFY. At 158 to 170 the chain is on the extracellular side; the sequence is RIGPYTNLSWSCY. An N-linked (GlcNAc...) asparagine glycan is attached at N164. Residues 171–191 form a helical membrane-spanning segment; the sequence is LNIGACLLATLAAAMLIWNIL. Topologically, residues 192–226 are cytoplasmic; that stretch reads HKREDCMAPRVIVISRSLTARFRRGLDNDYVESPC.

Highly expressed in lung, heart, kidney and placenta. Lower expression in thymus, spleen, liver, testis and ovary. Expressed in endothelial and restricted epithelial cell populations.

It is found in the cell junction. The protein localises to the adherens junction. Its subcellular location is the cell membrane. Its function is as follows. Can influence paracellular permeability. Appears to be involved in cell-cell interactions through adherens. The sequence is that of Transmembrane protein 204 (TMEM204) from Homo sapiens (Human).